Here is a 372-residue protein sequence, read N- to C-terminus: Cytochrome b (372 aa).

The next 4 helical transmembrane spans lie at 25-45, 69-90, 105-125, and 170-190; these read FGSM…FLAI, WMMQ…YIHI, WLSG…GYVL, and FFAL…IHIM. Heme b is bound by residues His75 and His89. The heme b site is built by His174 and His188. His193 contacts a ubiquinone. A run of 4 helical transmembrane segments spans residues 218–238, 280–300, 312–332, and 339–358; these read HKDM…MSFT, LGGT…PFTH, LMQF…WAAT, and FTSI…TMNP.

Belongs to the cytochrome b family. As to quaternary structure, the cytochrome bc1 complex contains 3 respiratory subunits (MT-CYB, CYC1 and UQCRFS1), 2 core proteins (UQCRC1 and UQCRC2) and probably 6 low-molecular weight proteins. It depends on heme b as a cofactor.

It is found in the mitochondrion inner membrane. In terms of biological role, component of the ubiquinol-cytochrome c reductase complex (complex III or cytochrome b-c1 complex) that is part of the mitochondrial respiratory chain. The b-c1 complex mediates electron transfer from ubiquinol to cytochrome c. Contributes to the generation of a proton gradient across the mitochondrial membrane that is then used for ATP synthesis. The polypeptide is Cytochrome b (MT-CYB) (Pantherophis vulpinus (Western fox snake)).